A 256-amino-acid polypeptide reads, in one-letter code: Thiazole synthase (256 aa).

Lys95 (schiff-base intermediate with DXP) is an active-site residue. Residues Gly156, 182 to 183 (AG), and 204 to 205 (NT) contribute to the 1-deoxy-D-xylulose 5-phosphate site.

Belongs to the ThiG family. Homotetramer. Forms heterodimers with either ThiH or ThiS.

It localises to the cytoplasm. It carries out the reaction [ThiS sulfur-carrier protein]-C-terminal-Gly-aminoethanethioate + 2-iminoacetate + 1-deoxy-D-xylulose 5-phosphate = [ThiS sulfur-carrier protein]-C-terminal Gly-Gly + 2-[(2R,5Z)-2-carboxy-4-methylthiazol-5(2H)-ylidene]ethyl phosphate + 2 H2O + H(+). It functions in the pathway cofactor biosynthesis; thiamine diphosphate biosynthesis. Its function is as follows. Catalyzes the rearrangement of 1-deoxy-D-xylulose 5-phosphate (DXP) to produce the thiazole phosphate moiety of thiamine. Sulfur is provided by the thiocarboxylate moiety of the carrier protein ThiS. In vitro, sulfur can be provided by H(2)S. This chain is Thiazole synthase, found in Salmonella choleraesuis (strain SC-B67).